Consider the following 391-residue polypeptide: Putative gustatory receptor 98a (391 aa).

Over 1-31 (MEQMSGELHAASLLYMRRLMKCLGMLPFGQN) the chain is Cytoplasmic. A helical membrane pass occupies residues 32–52 (LFSKGFCYVLLFVSLGFSSYW). Residues 53-74 (RFSFDYEFDYDFLNDRFSSTID) lie on the Extracellular side of the membrane. A helical transmembrane segment spans residues 75–95 (LSNFVALVLGHAIIVLELLWG). Residues 96–128 (NCSKDVDRQLQAIHSQIKLQLGTSNSTDRVRRY) lie on the Cytoplasmic side of the membrane. Residues 129–149 (CNWIYGSLIIRWLIFIVVTIY) form a helical membrane-spanning segment. The Extracellular portion of the chain corresponds to 150–173 (SNRALTINATYSELVFLARFSEFT). N157 is a glycosylation site (N-linked (GlcNAc...) asparagine). Residues 174–194 (LYCAVILFIYQELIVGGSNVL) traverse the membrane as a helical segment. Residues 195-239 (DELYRTRYEMWSIRRLSLQKLAKLQAIHNSLWQAIRCLECYFQLS) are Cytoplasmic-facing. A helical transmembrane segment spans residues 240 to 260 (LITLLMKFFIDTSALPYWLYL). Residues 261–272 (SRVEHTRVAVQH) lie on the Extracellular side of the membrane. The chain crosses the membrane as a helical span at residues 273-293 (YVATVECIKLLEIVVPCYLCT). Residues 294-347 (RCDAMQRKFLSMFYTVTTDRRSSQLNAALRSLNLQLSQEKYKFSAGGMVDINTE) lie on the Cytoplasmic side of the membrane. Residues 348–368 (MLGKFFFGMISYIVICIQFSI) form a helical membrane-spanning segment. Topologically, residues 369-391 (NFRAKKMSNEQMSQNITSTSAPI) are extracellular. A glycan (N-linked (GlcNAc...) asparagine) is linked at N383.

It belongs to the insect chemoreceptor superfamily. Gustatory receptor (GR) family. Gr2a subfamily.

The protein resides in the cell membrane. Functionally, probable gustatory receptor which mediates acceptance or avoidance behavior, depending on its substrates. This is Putative gustatory receptor 98a (Gr98a) from Drosophila melanogaster (Fruit fly).